We begin with the raw amino-acid sequence, 357 residues long: uncharacterized protein (357 aa).

This is an uncharacterized protein from Mycoplasma pneumoniae (strain ATCC 29342 / M129 / Subtype 1) (Mycoplasmoides pneumoniae).